The chain runs to 341 residues: UDP-N-acetylenolpyruvoylglucosamine reductase (341 aa).

The region spanning 15–185 is the FAD-binding PCMH-type domain; that stretch reads VEQSCLSLIE…TAVGLRLPKA (171 aa). Arg-161 is a catalytic residue. Ser-231 functions as the Proton donor in the catalytic mechanism. Glu-327 is a catalytic residue.

This sequence belongs to the MurB family. Requires FAD as cofactor.

It localises to the cytoplasm. The enzyme catalyses UDP-N-acetyl-alpha-D-muramate + NADP(+) = UDP-N-acetyl-3-O-(1-carboxyvinyl)-alpha-D-glucosamine + NADPH + H(+). Its pathway is cell wall biogenesis; peptidoglycan biosynthesis. Its function is as follows. Cell wall formation. The polypeptide is UDP-N-acetylenolpyruvoylglucosamine reductase (Shewanella sp. (strain ANA-3)).